The primary structure comprises 199 residues: GTP cyclohydrolase-2 (199 aa).

49 to 53 (RIHSE) lines the GTP pocket. Zn(2+)-binding residues include C54, C65, and C67. GTP is bound by residues Q70, 92 to 94 (EGR), and T114. Residue D126 is the Proton acceptor of the active site. The Nucleophile role is filled by R128. Positions 149 and 154 each coordinate GTP. The disordered stretch occupies residues 172 to 199 (ETGRNPHNSHYLETKRGKLGHLLEGDSE).

It belongs to the GTP cyclohydrolase II family. Zn(2+) is required as a cofactor.

It catalyses the reaction GTP + 4 H2O = 2,5-diamino-6-hydroxy-4-(5-phosphoribosylamino)-pyrimidine + formate + 2 phosphate + 3 H(+). It functions in the pathway cofactor biosynthesis; riboflavin biosynthesis; 5-amino-6-(D-ribitylamino)uracil from GTP: step 1/4. In terms of biological role, catalyzes the conversion of GTP to 2,5-diamino-6-ribosylamino-4(3H)-pyrimidinone 5'-phosphate (DARP), formate and pyrophosphate. This is GTP cyclohydrolase-2 from Teredinibacter turnerae (strain ATCC 39867 / T7901).